A 61-amino-acid polypeptide reads, in one-letter code: Photosystem II reaction center X protein (61 aa).

A helical transmembrane segment spans residues 26–46; sequence IGSFIAAALLIVIPATAFLIF.

This sequence belongs to the PsbX family. Type 2 subfamily. In terms of assembly, PSII consists of a core antenna complex that captures photons, and an electron transfer chain that converts photonic excitation into a charge separation. PSII forms dimeric complexes.

It is found in the cellular thylakoid membrane. Involved in the binding and/or turnover of quinones at the Q(B) site of Photosystem II. The protein is Photosystem II reaction center X protein of Prochlorococcus marinus (strain MIT 9215).